Reading from the N-terminus, the 93-residue chain is Putative defensin-like protein 190 (93 aa).

The signal sequence occupies residues 1–30 (MKMAKAAATNDFGFITCLVIFLVLAGISNG). Cystine bridges form between cysteine 39/cysteine 89, cysteine 55/cysteine 75, cysteine 60/cysteine 84, and cysteine 64/cysteine 86.

Belongs to the DEFL family.

The protein resides in the secreted. The protein is Putative defensin-like protein 190 of Arabidopsis thaliana (Mouse-ear cress).